The following is a 188-amino-acid chain: MSKLEAILSQEVEAEIQALLQEAEAKAEAVKREAEEKAKALLQARERALEAQYRAALRRAESAGELLVATARTQARGEVLEEVRRRVREALEALPQKPEWPEVVRKLALEALEALPGAKALVANPEDLPHLEALARERGVELQAEPALRLGVRAVGAEGKTQVENSLLARLDRAWDALSSKVAQALWG.

It belongs to the V-ATPase E subunit family.

Its function is as follows. Produces ATP from ADP in the presence of a proton gradient across the membrane. The sequence is that of V-type ATP synthase subunit E (atpE) from Thermus thermophilus (strain ATCC 27634 / DSM 579 / HB8).